Here is a 221-residue protein sequence, read N- to C-terminus: Cytidylate kinase 1 (221 aa).

Residue 7–15 participates in ATP binding; the sequence is GPSASGKSS.

This sequence belongs to the cytidylate kinase family. Type 1 subfamily.

It is found in the cytoplasm. The catalysed reaction is CMP + ATP = CDP + ADP. It carries out the reaction dCMP + ATP = dCDP + ADP. This chain is Cytidylate kinase 1, found in Borrelia garinii subsp. bavariensis (strain ATCC BAA-2496 / DSM 23469 / PBi) (Borreliella bavariensis).